Here is a 61-residue protein sequence, read N- to C-terminus: Large ribosomal subunit protein uL30 (61 aa).

This sequence belongs to the universal ribosomal protein uL30 family. In terms of assembly, part of the 50S ribosomal subunit.

In Francisella tularensis subsp. tularensis (strain FSC 198), this protein is Large ribosomal subunit protein uL30.